The primary structure comprises 315 residues: ADP/ATP translocase 4 (315 aa).

Topologically, residues 1–19 (MHREPPKKKAEKRLFDASS) are mitochondrial intermembrane. The stretch at 18–110 (SSFGKDLLAG…FAFKDKYKQL (93 aa)) is one Solcar 1 repeat. Residues 20 to 49 (FGKDLLAGGVAAAVSKTAVAPIERVKLLLQ) form a helical membrane-spanning segment. At 50-86 (VQASSKQISPEARYKGMVDCLVRIPREQGFFSFWRGN) the chain is on the mitochondrial matrix side. Residues 87–111 (LANVIRYFPTQALNFAFKDKYKQLF) traverse the membrane as a helical segment. Residues R92 and K104 each coordinate ADP. The Mitochondrial intermembrane portion of the chain corresponds to 112-121 (MSGVNKEKQF). A helical transmembrane segment spans residues 122–142 (WRWFLANLASGGAAGATSLCV). Solcar repeat units lie at residues 123 to 213 (RWFL…VKGL) and 220 to 307 (TPFL…IKEF). At 143-190 (VYPLDFARTRLGVDIGKGPEERQFKGLGDCIMKIAKSDGIAGLYQGFG) the chain is on the mitochondrial matrix side. A helical transmembrane segment spans residues 191–211 (VSVQGIIVYRASYFGAYDTVK). Topologically, residues 212–222 (GLLPKPKKTPF) are mitochondrial intermembrane. The helical transmembrane segment at 223–243 (LVSFFIAQVVTTCSGILSYPF) threads the bilayer. The Mitochondrial matrix portion of the chain corresponds to 244–283 (DTVRRRMMMQSGEAKRQYKGTLDCFVKIYQHEGINSFFRG). R247 is an ADP binding site. Positions 247 to 252 (RRRMMM) are important for transport activity. The short motif at 247 to 252 (RRRMMM) is the Nucleotide carrier signature motif element. The helical transmembrane segment at 284–301 (AFSNVLRGTGGALVLVLY) threads the bilayer. Topologically, residues 302-315 (DKIKEFFHIDIGGR) are mitochondrial intermembrane.

It belongs to the mitochondrial carrier (TC 2.A.29) family. As to quaternary structure, monomer.

The protein resides in the mitochondrion inner membrane. The protein localises to the membrane. It localises to the cell projection. It is found in the cilium. Its subcellular location is the flagellum membrane. The catalysed reaction is ADP(in) + ATP(out) = ADP(out) + ATP(in). It catalyses the reaction dATP(out) + ADP(in) = dATP(in) + ADP(out). The enzyme catalyses dADP(in) + ADP(out) = dADP(out) + ADP(in). It carries out the reaction H(+)(in) = H(+)(out). Its activity is regulated as follows. The matrix-open state (m-state) is inhibited by the membrane-permeable bongkrekic acid (BKA). The cytoplasmic-open state (c-state) is inhibited by the membrane-impermeable toxic inhibitor carboxyatractyloside (CATR). Proton transporter activity is inhibited by ADP:ATP antiporter activity. In terms of biological role, ADP:ATP antiporter that mediates import of ADP into the mitochondrial matrix for ATP synthesis, and export of ATP out to fuel the cell. Cycles between the cytoplasmic-open state (c-state) and the matrix-open state (m-state): operates by the alternating access mechanism with a single substrate-binding site intermittently exposed to either the cytosolic (c-state) or matrix (m-state) side of the inner mitochondrial membrane. Specifically required during spermatogenesis, probably to mediate ADP:ATP exchange in spermatocytes. Large ATP supplies from mitochondria may be critical for normal progression of spermatogenesis during early stages of meiotic prophase I, including DNA double-strand break repair and chromosomal synapsis. In addition to its ADP:ATP antiporter activity, also involved in mitochondrial uncoupling and mitochondrial permeability transition pore (mPTP) activity. Plays a role in mitochondrial uncoupling by acting as a proton transporter: proton transport uncouples the proton flows via the electron transport chain and ATP synthase to reduce the efficiency of ATP production and cause mitochondrial thermogenesis. Proton transporter activity is inhibited by ADP:ATP antiporter activity, suggesting that SLC25A31/ANT4 acts as a master regulator of mitochondrial energy output by maintaining a delicate balance between ATP production (ADP:ATP antiporter activity) and thermogenesis (proton transporter activity). Proton transporter activity requires free fatty acids as cofactor, but does not transport it. Among nucleotides, may also exchange ADP for dATP and dADP. Also plays a key role in mPTP opening, a non-specific pore that enables free passage of the mitochondrial membranes to solutes of up to 1.5 kDa, and which contributes to cell death. It is however unclear if SLC25A31/ANT4 constitutes a pore-forming component of mPTP or regulates it. The protein is ADP/ATP translocase 4 of Macaca fascicularis (Crab-eating macaque).